A 466-amino-acid chain; its full sequence is Glutamate--tRNA ligase (466 aa).

A 'HIGH' region motif is present at residues P10–G20. The 'KMSKS' region signature appears at K252–R256. K255 contributes to the ATP binding site.

The protein belongs to the class-I aminoacyl-tRNA synthetase family. Glutamate--tRNA ligase type 1 subfamily. In terms of assembly, monomer.

Its subcellular location is the cytoplasm. It carries out the reaction tRNA(Glu) + L-glutamate + ATP = L-glutamyl-tRNA(Glu) + AMP + diphosphate. Functionally, catalyzes the attachment of glutamate to tRNA(Glu) in a two-step reaction: glutamate is first activated by ATP to form Glu-AMP and then transferred to the acceptor end of tRNA(Glu). This is Glutamate--tRNA ligase from Mycoplasmopsis synoviae (strain 53) (Mycoplasma synoviae).